Reading from the N-terminus, the 4423-residue chain is Nonribosomal peptide synthetase 7 (4423 aa).

The segment at 572-986 is condensation 1; sequence NIYPCTSIQE…LISQDDKNRI (415 aa). The adenylation 1 stretch occupies residues 1007–1404; it reads ERIQKQPSAV…GRRDTQVKIR (398 aa). In terms of domain architecture, Carrier 1 spans 1533 to 1609; that stretch reads LPLTETEQKL…DLARTIDERN (77 aa). Serine 1570 bears the O-(pantetheine 4'-phosphoryl)serine mark. The tract at residues 1657–2066 is condensation 2; sequence EDVYPCTSLQ…QFLDETHHET (410 aa). Positions 2102 to 2499 are adenylation 2; sequence RDVAKEQPDS…YIGRMGSEVK (398 aa). A Carrier 2 domain is found at 2642–2718; it reads VPQTRIGKKL…DCARILEADQ (77 aa). Serine 2679 carries the post-translational modification O-(pantetheine 4'-phosphoryl)serine. Positions 2764–3170 are condensation 3; the sequence is EDVYPCTPMQ…AASASSDDQT (407 aa). Residues 3205 to 3609 form an adenylation 3 region; sequence RSLETRPDSQ…GRGDSQIKIR (405 aa). A Carrier 3 domain is found at 3731 to 3804; that stretch reads TESEYITRTL…KMAVVAQHQT (74 aa). Serine 3765 is subject to O-(pantetheine 4'-phosphoryl)serine. The segment at 3875–4278 is condensation 4; the sequence is TFVLDAEGDL…SQDEKLALLG (404 aa). Polar residues predominate over residues 4288 to 4300; it reads KLTKLQRVNSPKE. The tract at residues 4288–4312 is disordered; it reads KLTKLQRVNSPKEQTLRKDKPTNGV.

Belongs to the NRP synthetase family.

It functions in the pathway secondary metabolite biosynthesis. In terms of biological role, nonribosomal peptide synthetase; part of the gene cluster that mediates the biosynthesis of the lipopeptide fusaristatin A. Fusaristatin A consists of a polyketide chain linked to three amino acid residues glutamine (Gln), dehydroalanine (dehydro-Ala), and beta-aminoisobutyric acid. The biosynthesis starts with formation of a linear polyketide chain by the highly reducing polyketide synthase PKS6. The gene cluster does not contain an acyl-CoA ligase or an acyl-transferase, and it is therefore predicted that the polyketide is transferred directly to the nonribosomal peptide synthetase NRPS7. Modules 1-3 from NRPS7 incorporate dehydro-Ala, Gln, and beta-aminoisobutyric acid in the compound, which is released by cyclization. The beta-aminoisobutyric acid units are most likely not freely available to the NRPS, but can be synthesized from thymine, which requires a dehydrogenase, a monooxygenase, and an aminotransferase. The fusaristatin A cluster contains a cytochrome P450 monooxygenase (FGSG_08207) and an aminotransferase (FGSG_17085), which theoretically can perform two of the enzymatic steps. The enzymes may however also be involved in biosynthesis of dehydroalanine or modification of the polyketide. The dehydro-Ala residue can be a result of cyclization, where serine is dehydrated. The last gene of the cluster encodes a protein with an A/B barrel domain found in variable enzymes, which hampers functional prediction. This chain is Nonribosomal peptide synthetase 7, found in Gibberella zeae (strain ATCC MYA-4620 / CBS 123657 / FGSC 9075 / NRRL 31084 / PH-1) (Wheat head blight fungus).